We begin with the raw amino-acid sequence, 638 residues long: Chaperone protein DnaK (638 aa).

Position 199 is a phosphothreonine; by autocatalysis (Thr199). Over residues 603–618 the composition is skewed to low complexity; it reads YAQPGAEAGAEQQGSA. Residues 603 to 638 are disordered; it reads YAQPGAEAGAEQQGSANNADDDIVDAEFEEVNDDKK. Residues 621–638 are compositionally biased toward acidic residues; sequence ADDDIVDAEFEEVNDDKK.

This sequence belongs to the heat shock protein 70 family.

Functionally, acts as a chaperone. This is Chaperone protein DnaK from Hydrogenovibrio crunogenus (strain DSM 25203 / XCL-2) (Thiomicrospira crunogena).